Here is a 463-residue protein sequence, read N- to C-terminus: MRADWIAKRRGQANVSQMHYARSGVVTEEMAFVAARERLEPELVRAEVARGRMVIPANVRHPELEPLAIGITACCKINANIGNSAVTSNIDEELAKLRVCLKYGADTVMDLSTGGDIPQIREAILRASPIPVGTVPIYECLAHVKDVADLTPELMLEIIEAQAAQGVDYMTIHAGVLRDFIPLAAHRITGIVSRGGALMAQWMLANKAENPFFTHFEQICEIFKRYDVTFSLGDGLRPGCLADASDAAQFAELKALGDLTRKAWEHGVQVMVEGPGHVPLDQIPMNMEKERELCSEAPFYVLGPLVTDIAPGYDHITSAIGAAVAAQHGAAMLCYVTPAEHLGLPDIDDVREGIVAYKIAAHAADVARHRPGARDRDDALSRARYAFDWNKQFELSLDPDTARAKHDETLPHEAFKSAEFCSMCGPKFCSMKIHGHLAEAAAAQDAAANGEAEKPAGGLQVLP.

Substrate-binding positions include N80, M109, Y138, H173, 193–195, 234–237, and E273; these read SRG and DGLR. H277 is a Zn(2+) binding site. Y300 is a substrate binding site. A Zn(2+)-binding site is contributed by H341. Residues C421, C424, and C429 each coordinate [4Fe-4S] cluster.

The protein belongs to the ThiC family. As to quaternary structure, homodimer. [4Fe-4S] cluster is required as a cofactor.

The enzyme catalyses 5-amino-1-(5-phospho-beta-D-ribosyl)imidazole + S-adenosyl-L-methionine = 4-amino-2-methyl-5-(phosphooxymethyl)pyrimidine + CO + 5'-deoxyadenosine + formate + L-methionine + 3 H(+). It functions in the pathway cofactor biosynthesis; thiamine diphosphate biosynthesis. Catalyzes the synthesis of the hydroxymethylpyrimidine phosphate (HMP-P) moiety of thiamine from aminoimidazole ribotide (AIR) in a radical S-adenosyl-L-methionine (SAM)-dependent reaction. The sequence is that of Phosphomethylpyrimidine synthase from Anaeromyxobacter dehalogenans (strain 2CP-1 / ATCC BAA-258).